The chain runs to 325 residues: MHLHSPPLMADGSFSLSGHLLRSPGGNPSRLHSIEAILGFAKEDSVLGSFQSEVSPRNAKEVDKRSSRHCLHKMTEEIHPQQEHLEDGQTGGYGDPYSAKTSSECLSPGLSTSNSDNKLSDDEQQPKKKHRRNRTTFTTYQLHELERAFEKSHYPDVYSREELAMKVNLPEVRVQVWFQNRRAKWRRQEKLEVTSMKLQDSPMLSFNRSPQPSAMSALSSSLPLDSWLTPPLSNSTALQSLPGFVTTPTSLPGSYTPPPFINPASMGHALQPLGAMGPPPPYQCGANFVDKYPLEEIDPRNNSIASLRMKAKEHIQSFGKPWQTI.

The Octapeptide motif motif lies at His32–Gly39. Over residues Thr75–Asp87 the composition is skewed to basic and acidic residues. A disordered region spans residues Thr75–Thr136. Polar residues predominate over residues Ala99–Asn117. The homeobox DNA-binding region spans His130–Glu189. Residues Asn302–Ile315 carry the OAR motif. Positions Arg308–Lys312 match the Nuclear localization signal motif.

It belongs to the paired homeobox family. Bicoid subfamily. As to expression, highly expressed in anterior neural plate followed by neural retina, pigmented epithelium, in pineal gland, diencephalon floor and epiphysis. At later stages, the neuroretina remains the primary site of expression. No expression in the developing lens and cornea.

Its subcellular location is the nucleus. Functionally, plays a critical role in eye formation by regulating the initial specification of retinal cells and/or their subsequent proliferation. This Xenopus laevis (African clawed frog) protein is Retinal homeobox protein Rx-B (rax-b).